Consider the following 634-residue polypeptide: DNA-directed RNA polymerase subunit gamma (634 aa).

Residues cysteine 74, cysteine 76, cysteine 89, and cysteine 92 each contribute to the Zn(2+) site. Mg(2+)-binding residues include aspartate 471, aspartate 473, and aspartate 475.

Belongs to the RNA polymerase beta' chain family. RpoC1 subfamily. In terms of assembly, in cyanobacteria the RNAP catalytic core is composed of 2 alpha, 1 beta, 1 beta', 1 gamma and 1 omega subunit. When a sigma factor is associated with the core the holoenzyme is formed, which can initiate transcription. It depends on Mg(2+) as a cofactor. Requires Zn(2+) as cofactor.

The enzyme catalyses RNA(n) + a ribonucleoside 5'-triphosphate = RNA(n+1) + diphosphate. Its function is as follows. DNA-dependent RNA polymerase catalyzes the transcription of DNA into RNA using the four ribonucleoside triphosphates as substrates. The polypeptide is DNA-directed RNA polymerase subunit gamma (Synechococcus sp. (strain CC9902)).